The sequence spans 885 residues: Pyruvate, phosphate dikinase (885 aa).

The N-terminal stretch occupies residues 1–342 (MQRVYAFEDG…LYMLQTRNGK (342 aa)). Arg91 provides a ligand contact to ATP. A linker 1 region spans residues 343–399 (MNATATVRTGVDMVEEGLITKEQAIMRIAPQSVDQLLHKNMPANYAEAPLVKGLPAS). The central stretch occupies residues 400 to 497 (PGAATGAVVF…EVHEGDILTI (98 aa)). The Tele-phosphohistidine intermediate role is filled by His454. The segment at 498–533 (DGSTGCVYKGEVPLEEPQVGSGYFGTILKWANEIKK) is linker 2. The segment at 534 to 885 (IGVFANADLP…QAQIRHPREN (352 aa)) is C-terminal. Substrate contacts are provided by Arg561, Arg617, Glu752, Gly773, Thr774, Asn775, and Asp776. Glu752 provides a ligand contact to Mg(2+). Residue Asp776 coordinates Mg(2+). Cys839 (proton donor) is an active-site residue.

The protein belongs to the PEP-utilizing enzyme family. In terms of assembly, homodimer. The cofactor is Mg(2+).

The catalysed reaction is pyruvate + phosphate + ATP = phosphoenolpyruvate + AMP + diphosphate + H(+). Functionally, catalyzes the dephosphorylation of phosphoenolpyruvate and diphosphate to produce ATP. This is Pyruvate, phosphate dikinase from Entamoeba histolytica (strain ATCC 30459 / HM-1:IMSS / ABRM).